The following is a 234-amino-acid chain: BTB/POZ domain-containing protein KCTD5 (234 aa).

An N-acetylalanine modification is found at Ala-2. Residues Lys-44–Asp-146 form the BTB domain. The disordered stretch occupies residues Asn-211–Met-234. Basic and acidic residues predominate over residues Pro-220–Met-234.

Homopentamer. Interacts (via C-terminus) with GRASP55/GORASP2. Interacts with CUL3 and with ubiquitinated proteins. Interacts with CRY1.

The protein localises to the cytoplasm. It is found in the cytosol. It localises to the nucleus. Its interaction with CUL3 suggests that it may act as a substrate adapter in some E3 ligase complex. Does not affect the function of Kv channel Kv2.1/KCNB1, Kv1.2/KCNA2, Kv4.2/KCND2 and Kv3.4/KCNC4. This is BTB/POZ domain-containing protein KCTD5 (KCTD5) from Bos taurus (Bovine).